The sequence spans 417 residues: MQVEANSERRVKILGIDRSENSPVLTYMETEDDPNFRNSKLAAAPHTVHMMDSGFLAINRQCLVKGKAILAREPKSSNEHMIDDLPKHAHDQHTLSILRDFIDQLKLHNVYEINFYDPLDSSGKLAVIPMLIALWKCMLASETDICDQEVLKSIMNSVIAKFELQIPCKNAVIDATLSGSREEVHIIAEDGSLENSNGTTEHFNKKHDLVFVKTDLHPEDFTPQMFPSQAKAKLLRDAFNNEEDEDTFPDILVPAYMTAHSKNRVRQEDYTCLEVEFDSQVALEKLMNEHEQVEGFEVQQGGILVALKKDSFFDDELIEKIAIAIATESRQSVSSVSFDLLKLGPGASLVTLANSRRFEPECRVVLQIEVKPVSPGETSSEGISDEHHYEEYDEDDIMEEEEAPSARQDDTYDEDEE.

The disordered stretch occupies residues 373 to 417 (VSPGETSSEGISDEHHYEEYDEDDIMEEEEAPSARQDDTYDEDEE). The span at 391–403 (EYDEDDIMEEEEA) shows a compositional bias: acidic residues.

The protein belongs to the GHMP kinase family. Xol-1 subfamily.

The protein resides in the nucleus. Functionally, sex-determining factor that is required for sexual differentiation and X chromosome dosage compensation to promote male development. High expression during gastrulation triggers male development, while low expression at that time triggers hermaphrodite development. Although related to GHMP kinase, its mode of action remains unclear. The polypeptide is XO lethal protein 1 (Caenorhabditis elegans).